A 347-amino-acid polypeptide reads, in one-letter code: Haptoglobin (347 aa).

The N-terminal stretch at 1–18 (MRALGAVITLLLWGQLFA) is a signal peptide. Residues 31–88 (DSCPKPPEIANGYVEHLVRYQCKNYYRLRTEGDGVYALNSEKQWVNKAVGEQLPECEA) enclose the Sushi domain. 2 cysteine pairs are disulfide-bonded: Cys-52–Cys-86 and Cys-90–Cys-207. The region spanning 103–345 (IIGGSLDAKG…ILDWIQKTIA (243 aa)) is the Peptidase S1 domain. N-linked (GlcNAc...) asparagine glycosylation is found at Asn-148, Asn-152, Asn-182, Asn-230, and Asn-256. Intrachain disulfides connect Cys-250–Cys-281 and Cys-292–Cys-322. Residues 259 to 264 (VPENKI) are interaction with CD163.

The protein belongs to the peptidase S1 family. As to quaternary structure, tetramer of two alpha and two beta chains; disulfide-linked. The hemoglobin/haptoglobin complex is composed of a haptoglobin dimer bound to two hemoglobin alpha-beta dimers. Interacts with CD163. Interacts with ERGIC3. As to expression, expressed by the liver and secreted in plasma.

It localises to the secreted. As a result of hemolysis, hemoglobin is found to accumulate in the kidney and is secreted in the urine. Haptoglobin captures, and combines with free plasma hemoglobin to allow hepatic recycling of heme iron and to prevent kidney damage. Haptoglobin also acts as an antioxidant, has antibacterial activity and plays a role in modulating many aspects of the acute phase response. Hemoglobin/haptoglobin complexes are rapidly cleared by the macrophage CD163 scavenger receptor expressed on the surface of liver Kupfer cells through an endocytic lysosomal degradation pathway. The sequence is that of Haptoglobin (HP) from Oryctolagus cuniculus (Rabbit).